A 138-amino-acid polypeptide reads, in one-letter code: Putative protein encoded by LINC02912 (138 aa).

Transmembrane regions (helical) follow at residues 32–52 (FALS…CLIC) and 65–85 (CLIN…TISQ). The disordered stretch occupies residues 109–138 (SGGQSQHSWPCPERSKNLPQVSKQLRNRAG).

The protein localises to the membrane. This chain is Putative protein encoded by LINC02912, found in Homo sapiens (Human).